Here is a 159-residue protein sequence, read N- to C-terminus: 2-C-methyl-D-erythritol 2,4-cyclodiphosphate synthase (159 aa).

A divalent metal cation-binding residues include D8 and H10. 4-CDP-2-C-methyl-D-erythritol 2-phosphate is bound by residues 8 to 10 (DVH) and 34 to 35 (HS). H42 contacts a divalent metal cation. Residues 56–58 (DIG), 61–65 (FPDTD), 100–106 (AQEPKMA), 132–135 (TTTE), F139, and R142 each bind 4-CDP-2-C-methyl-D-erythritol 2-phosphate.

This sequence belongs to the IspF family. As to quaternary structure, homotrimer. Requires a divalent metal cation as cofactor.

The enzyme catalyses 4-CDP-2-C-methyl-D-erythritol 2-phosphate = 2-C-methyl-D-erythritol 2,4-cyclic diphosphate + CMP. It functions in the pathway isoprenoid biosynthesis; isopentenyl diphosphate biosynthesis via DXP pathway; isopentenyl diphosphate from 1-deoxy-D-xylulose 5-phosphate: step 4/6. In terms of biological role, involved in the biosynthesis of isopentenyl diphosphate (IPP) and dimethylallyl diphosphate (DMAPP), two major building blocks of isoprenoid compounds. Catalyzes the conversion of 4-diphosphocytidyl-2-C-methyl-D-erythritol 2-phosphate (CDP-ME2P) to 2-C-methyl-D-erythritol 2,4-cyclodiphosphate (ME-CPP) with a corresponding release of cytidine 5-monophosphate (CMP). In Alkaliphilus metalliredigens (strain QYMF), this protein is 2-C-methyl-D-erythritol 2,4-cyclodiphosphate synthase.